Consider the following 474-residue polypeptide: ATP synthase subunit beta (474 aa).

Gly-153 to Thr-160 provides a ligand contact to ATP.

Belongs to the ATPase alpha/beta chains family. F-type ATPases have 2 components, CF(1) - the catalytic core - and CF(0) - the membrane proton channel. CF(1) has five subunits: alpha(3), beta(3), gamma(1), delta(1), epsilon(1). CF(0) has three main subunits: a(1), b(2) and c(9-12). The alpha and beta chains form an alternating ring which encloses part of the gamma chain. CF(1) is attached to CF(0) by a central stalk formed by the gamma and epsilon chains, while a peripheral stalk is formed by the delta and b chains.

Its subcellular location is the cell inner membrane. The catalysed reaction is ATP + H2O + 4 H(+)(in) = ADP + phosphate + 5 H(+)(out). In terms of biological role, produces ATP from ADP in the presence of a proton gradient across the membrane. The catalytic sites are hosted primarily by the beta subunits. The polypeptide is ATP synthase subunit beta (Rickettsia prowazekii (strain Madrid E)).